We begin with the raw amino-acid sequence, 333 residues long: Testin-2 (333 aa).

The signal sequence occupies residues M1 to T17. 3 disulfide bridges follow: C135/C178, C169/C211, and C269/C322. N-linked (GlcNAc...) asparagine glycosylation is present at N173. Residues H276 and N300 contribute to the active site.

It belongs to the peptidase C1 family. Sertoli cells.

It is found in the secreted. The sequence is that of Testin-2 (Testin) from Rattus norvegicus (Rat).